Consider the following 148-residue polypeptide: 3-hydroxyacyl-[acyl-carrier-protein] dehydratase FabZ (148 aa).

The active site involves histidine 50.

Belongs to the thioester dehydratase family. FabZ subfamily.

The protein resides in the cytoplasm. The enzyme catalyses a (3R)-hydroxyacyl-[ACP] = a (2E)-enoyl-[ACP] + H2O. Functionally, involved in unsaturated fatty acids biosynthesis. Catalyzes the dehydration of short chain beta-hydroxyacyl-ACPs and long chain saturated and unsaturated beta-hydroxyacyl-ACPs. In Lactobacillus helveticus (strain DPC 4571), this protein is 3-hydroxyacyl-[acyl-carrier-protein] dehydratase FabZ.